Here is a 481-residue protein sequence, read N- to C-terminus: 7-deoxyloganetin glucosyltransferase (481 aa).

H22 (proton acceptor) is an active-site residue. An an anthocyanidin-binding site is contributed by H22. Residue D126 is the Charge relay of the active site. T148, Q363, H378, W381, N382, S383, and E386 together coordinate UDP-alpha-D-glucose. Position 401 (A401) interacts with an anthocyanidin. E402 and Q403 together coordinate UDP-alpha-D-glucose.

The protein belongs to the UDP-glycosyltransferase family. In terms of tissue distribution, ubiquitous. Very low expression in stems.

It carries out the reaction 7-deoxyloganetin + UDP-alpha-D-glucose = 7-deoxyloganin + UDP + H(+). Iridoid glucosyltransferase acting on genipin and 7-deoxyloganetin. No activity with 7-deoxyloganetic acid. Involved in geniposide biosynthesis. This is 7-deoxyloganetin glucosyltransferase (UGT85A24) from Gardenia jasminoides (Cape jasmine).